A 150-amino-acid polypeptide reads, in one-letter code: uncharacterized protein (150 aa).

The Flavodoxin-like domain occupies Val3 to Ala145.

It belongs to the flavodoxin family. MioC subfamily. The cofactor is FMN.

Functionally, probable electron transporter. This is an uncharacterized protein from Pseudomonas aeruginosa (strain ATCC 15692 / DSM 22644 / CIP 104116 / JCM 14847 / LMG 12228 / 1C / PRS 101 / PAO1).